The chain runs to 225 residues: Cold-regulated 413 inner membrane protein 1, chloroplastic (225 aa).

A chloroplast-targeting transit peptide spans 1-76 (MASLCLSSSR…RKRGSSVVCY (76 aa)). Residue alanine 77 is a topological domain, stromal. Residues 78-98 (APISANSLQWISTISCLALML) form a helical membrane-spanning segment. Over 99 to 102 (ARGT) the chain is Chloroplast intermembrane. A helical membrane pass occupies residues 103-123 (GIHKSVVVPLFALHAPSSIVA). Topologically, residues 124 to 128 (WIKGE) are stromal. The chain crosses the membrane as a helical span at residues 129 to 149 (YGVWAAFLALIARLFFTFPGE). Topologically, residues 150-151 (LE) are chloroplast intermembrane. Residues 152 to 172 (LPFIALLLVIVAPYQVMNIRG) traverse the membrane as a helical segment. Residues 173-175 (KQE) are Stromal-facing. Residues 176–196 (GAIIAIAISGFLAFQHFSRAG) traverse the membrane as a helical segment. At 197 to 204 (SLEKAYEK) the chain is on the chloroplast intermembrane side. The chain crosses the membrane as a helical span at residues 205–225 (GSVLATVAIIGVTVVSLLLLL).

It belongs to the Cold-regulated 413 protein family.

The protein resides in the plastid. It is found in the chloroplast inner membrane. This chain is Cold-regulated 413 inner membrane protein 1, chloroplastic (COR413IM1), found in Arabidopsis thaliana (Mouse-ear cress).